The sequence spans 559 residues: Extracellular matrix protein 1 (559 aa).

The N-terminal stretch at 1-19 is a signal peptide; that stretch reads MGTVSRAALILACLALASA. Repeat copies occupy residues 170-298 and 302-424. Residues 170–424 are 2 X approximate repeats; sequence HCQQGRRGVW…FAHLAPYPNY (255 aa). Residue N373 is glycosylated (N-linked (GlcNAc...) asparagine). N-linked (GlcNAc...) (high mannose) asparagine glycosylation is found at N463 and N535. The interval 535–559 is disordered; that stretch reads NATGLGEQGPTRGTDANPAPGSKEE. At S556 the chain carries Phosphoserine.

In terms of assembly, interacts (via C-terminus) with HSPG2 (via C-terminus). Interacts with EFEMP1/FBLN3 and LAMB3. Interacts with MMP9. As to expression, expressed in the surrounding connective tissues of developing long bones, but not in the cartilage. The long isoform is expressed in a number of tissues including liver, heart and lungs. The short isoform is expressed in skin and cartilage-containing tissues such as tail and front paw. No expression is found in brain.

The protein resides in the secreted. It is found in the extracellular space. It localises to the extracellular matrix. Involved in endochondral bone formation as negative regulator of bone mineralization. Stimulates the proliferation of endothelial cells and promotes angiogenesis. Inhibits MMP9 proteolytic activity. The sequence is that of Extracellular matrix protein 1 (Ecm1) from Mus musculus (Mouse).